Consider the following 47-residue polypeptide: PhoP/PhoQ regulator MgrB (47 aa).

Residues 6-26 traverse the membrane as a helical segment; the sequence is WVALVVVVLACLLLWAQVFNM.

It belongs to the MgrB family. In terms of assembly, may form homooligomers. Probably interacts with the periplasmic domain of PhoQ.

It is found in the cell inner membrane. In terms of biological role, phoP-regulated transcription is redox-sensitive, being activated when the periplasm becomes more reducing. MgrB acts between DsbA/DsbB and PhoP/PhoQ in this pathway. Represses PhoP/PhoQ signaling, possibly by binding to the periplasmic domain of PhoQ, altering its activity and that of downstream effector PhoP. The chain is PhoP/PhoQ regulator MgrB from Escherichia coli O127:H6 (strain E2348/69 / EPEC).